A 681-amino-acid chain; its full sequence is Angiomotin-like 2b (681 aa).

The segment covering G68–Q84 has biased composition (low complexity). Positions G68–D106 are disordered. Over residues P90–E102 the composition is skewed to polar residues. Y126 carries the post-translational modification Phosphotyrosine; by FGFR1. 3 coiled-coil regions span residues N268–G319, I362–T441, and V481–K508. A disordered region spans residues Q589–R618. Over residues T597–H611 the composition is skewed to polar residues. A PDZ-binding motif is present at residues E678–I681.

The protein belongs to the angiomotin family. As to quaternary structure, interacts with SRC. In terms of processing, phosphorylation at Tyr-126 is necessary for efficient binding to SRC and synergistically functioning with SRC to activate the downstream MAPK pathway. Expressed in endothelial cells.

It localises to the recycling endosome. Its subcellular location is the cytoplasm. The protein localises to the cell projection. The protein resides in the podosome. It is found in the cell junction. In terms of biological role, required for proper architecture of actin filaments and for cell movements during embryogenesis. Plays a role in the radial actin fiber architecture in skin epithelial cells, thereby maintains cell geometry, size and cell interconnectivity within the skin. Plays an important role in coupling actin fibers to cell junctions in endothelial cells and is therefore required for correct endothelial cell morphology and maintenance of dorsal aorta lumen expansion during embryogenesis. May further play a role in the polarity, proliferation and migration of endothelial cells, and therefore participates in angiogenesis. May regulate the translocation of phosphorylated SRC to peripheral cell-matrix adhesion sites. The sequence is that of Angiomotin-like 2b from Danio rerio (Zebrafish).